The sequence spans 1293 residues: Phosphoribosylformylglycinamidine synthase (1293 aa).

ATP contacts are provided by residues 305–316 (GAATGSGGEIRD) and alanine 676. A disordered region spans residues 305–327 (GAATGSGGEIRDEGATGRGSKPK). 4 residues coordinate Mg(2+): aspartate 677, glutamate 716, asparagine 720, and aspartate 884. Residue serine 886 coordinates ATP. Residues 1040 to 1293 (MAILREQGVN…MFRNARVNLG (254 aa)) form the Glutamine amidotransferase type-1 domain. The Nucleophile role is filled by cysteine 1133. Active-site residues include histidine 1258 and glutamate 1260.

This sequence in the N-terminal section; belongs to the FGAMS family. Monomer.

It localises to the cytoplasm. The catalysed reaction is N(2)-formyl-N(1)-(5-phospho-beta-D-ribosyl)glycinamide + L-glutamine + ATP + H2O = 2-formamido-N(1)-(5-O-phospho-beta-D-ribosyl)acetamidine + L-glutamate + ADP + phosphate + H(+). It functions in the pathway purine metabolism; IMP biosynthesis via de novo pathway; 5-amino-1-(5-phospho-D-ribosyl)imidazole from N(2)-formyl-N(1)-(5-phospho-D-ribosyl)glycinamide: step 1/2. Its function is as follows. Phosphoribosylformylglycinamidine synthase involved in the purines biosynthetic pathway. Catalyzes the ATP-dependent conversion of formylglycinamide ribonucleotide (FGAR) and glutamine to yield formylglycinamidine ribonucleotide (FGAM) and glutamate. The chain is Phosphoribosylformylglycinamidine synthase from Shewanella oneidensis (strain ATCC 700550 / JCM 31522 / CIP 106686 / LMG 19005 / NCIMB 14063 / MR-1).